A 299-amino-acid polypeptide reads, in one-letter code: Pyridoxal 5'-phosphate synthase subunit PdxS (299 aa).

Asp24 contributes to the D-ribose 5-phosphate binding site. Lys81 functions as the Schiff-base intermediate with D-ribose 5-phosphate in the catalytic mechanism. Gly153 is a D-ribose 5-phosphate binding site. A D-glyceraldehyde 3-phosphate-binding site is contributed by Arg165. Residues Gly219 and 240 to 241 (GS) contribute to the D-ribose 5-phosphate site.

It belongs to the PdxS/SNZ family. As to quaternary structure, in the presence of PdxT, forms a dodecamer of heterodimers.

It catalyses the reaction aldehydo-D-ribose 5-phosphate + D-glyceraldehyde 3-phosphate + L-glutamine = pyridoxal 5'-phosphate + L-glutamate + phosphate + 3 H2O + H(+). It functions in the pathway cofactor biosynthesis; pyridoxal 5'-phosphate biosynthesis. Catalyzes the formation of pyridoxal 5'-phosphate from ribose 5-phosphate (RBP), glyceraldehyde 3-phosphate (G3P) and ammonia. The ammonia is provided by the PdxT subunit. Can also use ribulose 5-phosphate and dihydroxyacetone phosphate as substrates, resulting from enzyme-catalyzed isomerization of RBP and G3P, respectively. The chain is Pyridoxal 5'-phosphate synthase subunit PdxS from Methanococcus aeolicus (strain ATCC BAA-1280 / DSM 17508 / OCM 812 / Nankai-3).